Consider the following 264-residue polypeptide: Acyl-[acyl-carrier-protein]--UDP-N-acetylglucosamine O-acyltransferase (264 aa).

The protein belongs to the transferase hexapeptide repeat family. LpxA subfamily. As to quaternary structure, homotrimer.

Its subcellular location is the cytoplasm. The enzyme catalyses a (3R)-hydroxyacyl-[ACP] + UDP-N-acetyl-alpha-D-glucosamine = a UDP-3-O-[(3R)-3-hydroxyacyl]-N-acetyl-alpha-D-glucosamine + holo-[ACP]. It functions in the pathway glycolipid biosynthesis; lipid IV(A) biosynthesis; lipid IV(A) from (3R)-3-hydroxytetradecanoyl-[acyl-carrier-protein] and UDP-N-acetyl-alpha-D-glucosamine: step 1/6. Functionally, involved in the biosynthesis of lipid A, a phosphorylated glycolipid that anchors the lipopolysaccharide to the outer membrane of the cell. The sequence is that of Acyl-[acyl-carrier-protein]--UDP-N-acetylglucosamine O-acyltransferase from Rickettsia canadensis (strain McKiel).